Consider the following 338-residue polypeptide: Fructose-1,6-bisphosphatase 1 (338 aa).

An N-acetylthreonine modification is found at Thr-2. Residues 18 to 22 (VMEEG) and 28 to 32 (TGEMT) contribute to the AMP site. Residues Asp-69 and Glu-98 each coordinate Mg(2+). 113 to 114 (KY) contributes to the AMP binding site. Residues Asp-119, Leu-121, and Asp-122 each contribute to the Mg(2+) site. 122-125 (DGSS) is a binding site for substrate. An AMP-binding site is contributed by Arg-141. Lys-151 bears the N6-succinyllysine mark. At Ser-208 the chain carries Phosphoserine; by PKA. Substrate contacts are provided by residues 213-216 (NEGY), 244-249 (RYVGSM), Tyr-265, and 275-277 (KLR). Phosphotyrosine is present on residues Tyr-216, Tyr-245, and Tyr-265. Residue Glu-281 participates in Mg(2+) binding.

Belongs to the FBPase class 1 family. Homotetramer. Mg(2+) is required as a cofactor.

The catalysed reaction is beta-D-fructose 1,6-bisphosphate + H2O = beta-D-fructose 6-phosphate + phosphate. It functions in the pathway carbohydrate biosynthesis; gluconeogenesis. Subject to complex allosteric regulation. The enzyme can assume an active R-state, or an inactive T-state. Intermediate conformations may exist. AMP acts as an allosteric inhibitor. AMP binding affects the turnover of bound substrate and not the affinity for substrate. Fructose 2,6-bisphosphate acts as a competitive inhibitor. Fructose 2,6-bisphosphate and AMP have synergistic effects. Its function is as follows. Catalyzes the hydrolysis of fructose 1,6-bisphosphate to fructose 6-phosphate in the presence of divalent cations, acting as a rate-limiting enzyme in gluconeogenesis. Plays a role in regulating glucose sensing and insulin secretion of pancreatic beta-cells. Appears to modulate glycerol gluconeogenesis in liver. Important regulator of appetite and adiposity; increased expression of the protein in liver after nutrient excess increases circulating satiety hormones and reduces appetite-stimulating neuropeptides and thus seems to provide a feedback mechanism to limit weight gain. The protein is Fructose-1,6-bisphosphatase 1 (FBP1) of Sus scrofa (Pig).